The primary structure comprises 263 residues: Uroplakin-3b-like protein 1 (263 aa).

An N-terminal signal peptide occupies residues 1–33; it reads MDNSWRLGPAIGLSAGQSQLLVSLLLLLTRVQP. Residues 34-204 are Extracellular-facing; that stretch reads GTDVAAPEHI…PGPQSPGTVV (171 aa). N-linked (GlcNAc...) asparagine glycans are attached at residues Asn51, Asn76, and Asn91. A helical membrane pass occupies residues 205–225; sequence IIAILSILLAVLLTVLLAVLI. Over 226 to 263 the chain is Cytoplasmic; sequence YTCFNSCRSTSLSGPEEAGSVRRYTTHLAFSTPAEGAS.

Belongs to the uroplakin-3 family.

Its subcellular location is the membrane. The chain is Uroplakin-3b-like protein 1 from Homo sapiens (Human).